The chain runs to 333 residues: Biotin synthase (333 aa).

Residues 47–276 form the Radical SAM core domain; sequence ADIQRASLLS…KARVRLSAGR (230 aa). [4Fe-4S] cluster contacts are provided by Cys62, Cys66, and Cys69. Residues Cys107, Cys139, Cys199, and Arg271 each coordinate [2Fe-2S] cluster.

It belongs to the radical SAM superfamily. Biotin synthase family. In terms of assembly, homodimer. It depends on [4Fe-4S] cluster as a cofactor. [2Fe-2S] cluster is required as a cofactor.

The catalysed reaction is (4R,5S)-dethiobiotin + (sulfur carrier)-SH + 2 reduced [2Fe-2S]-[ferredoxin] + 2 S-adenosyl-L-methionine = (sulfur carrier)-H + biotin + 2 5'-deoxyadenosine + 2 L-methionine + 2 oxidized [2Fe-2S]-[ferredoxin]. Its pathway is cofactor biosynthesis; biotin biosynthesis; biotin from 7,8-diaminononanoate: step 2/2. Functionally, catalyzes the conversion of dethiobiotin (DTB) to biotin by the insertion of a sulfur atom into dethiobiotin via a radical-based mechanism. This chain is Biotin synthase, found in Methylobacterium nodulans (strain LMG 21967 / CNCM I-2342 / ORS 2060).